Reading from the N-terminus, the 345-residue chain is MTKKSTIQPCLVCGQSSNSILFGAPSCRACGEFFRRKVISNFKIKNNCLGECSFAKKSMKPCQSCRFQKCLEAGMLEKMVFSRKAIYSISNFEKSILEELEEAYSKLEHGRNETFNPKSDSNPKFCSHEELNNTCTIDIQIILDNLISYFQAKKPMGKEQDDVLKMHFIVPFVLFDTAFRAIGKSSYISPDGTMFGGSYVEKLYQDSSNSKIGVNNGKTSREIMESYWKVSYKILKSEMELLQLDRSEFLLLSALIYWDFGLENQSDKCCENCNTIREKVLKELVKYERKKSGQNALRIAMIMGLLQAVPKALDVMKTCGFLSKIYNLRGSGCPLYAISTNSPPQ.

The segment at residues 7 to 82 (IQPCLVCGQS…AGMLEKMVFS (76 aa)) is a DNA-binding region (nuclear receptor). An NR C4-type zinc finger spans residues 10-30 (CLVCGQSSNSILFGAPSCRAC). The segment at 46 to 65 (NNCLGECSFAKKSMKPCQSC) adopts an NR C4-type; degenerate zinc-finger fold. Positions 92 to 342 (FEKSILEELE…CPLYAISTNS (251 aa)) constitute an NR LBD domain. The segment at 331-342 (SGCPLYAISTNS) is AF-2.

It is found in the nucleus. In terms of biological role, nuclear hormone receptor. Binds to xenobiotic ligand thiabendazole (TBZ), in vitro. Involved in the up-regulation of phase I detoxification genes, such as probable cytochrome P450 cyp-35d1, in response to TBZ. This is Nuclear hormone receptor family nhr-176 from Caenorhabditis elegans.